Reading from the N-terminus, the 109-residue chain is Small ribosomal subunit protein bS6 (109 aa).

Belongs to the bacterial ribosomal protein bS6 family.

Binds together with bS18 to 16S ribosomal RNA. The chain is Small ribosomal subunit protein bS6 from Dehalococcoides mccartyi (strain ATCC BAA-2266 / KCTC 15142 / 195) (Dehalococcoides ethenogenes (strain 195)).